Reading from the N-terminus, the 483-residue chain is Cobyric acid synthase (483 aa).

The 179-residue stretch at 252-430 (ALQVVAVAYP…LHRLFDSGPF (179 aa)) folds into the GATase cobBQ-type domain. Catalysis depends on Cys333, which acts as the Nucleophile. Residue His422 is part of the active site.

It belongs to the CobB/CobQ family. CobQ subfamily.

Its pathway is cofactor biosynthesis; adenosylcobalamin biosynthesis. In terms of biological role, catalyzes amidations at positions B, D, E, and G on adenosylcobyrinic A,C-diamide. NH(2) groups are provided by glutamine, and one molecule of ATP is hydrogenolyzed for each amidation. The chain is Cobyric acid synthase from Halorhodospira halophila (strain DSM 244 / SL1) (Ectothiorhodospira halophila (strain DSM 244 / SL1)).